Here is a 112-residue protein sequence, read N- to C-terminus: Toxin-like structure LSTX-D10 (112 aa).

Residues 1–20 form the signal peptide; sequence MMKVLVVVALLVTLISYSSS. The propeptide occupies 21–41; it reads EGIDDLEADELLSLMANEQTR. 4 cysteine pairs are disulfide-bonded: Cys-45–Cys-60, Cys-52–Cys-69, Cys-59–Cys-84, and Cys-71–Cys-82.

This sequence belongs to the neurotoxin 19 (CSTX) family. 01 subfamily. As to expression, expressed by the venom gland.

Its subcellular location is the secreted. This Lycosa singoriensis (Wolf spider) protein is Toxin-like structure LSTX-D10.